Here is a 428-residue protein sequence, read N- to C-terminus: Serine--tRNA ligase (428 aa).

Residue 235 to 237 (TAE) participates in L-serine binding. 266–268 (RSE) provides a ligand contact to ATP. Residue glutamate 289 coordinates L-serine. 353 to 356 (EISS) is a binding site for ATP. Residue serine 389 participates in L-serine binding.

This sequence belongs to the class-II aminoacyl-tRNA synthetase family. Type-1 seryl-tRNA synthetase subfamily. Homodimer. The tRNA molecule binds across the dimer.

It localises to the cytoplasm. It catalyses the reaction tRNA(Ser) + L-serine + ATP = L-seryl-tRNA(Ser) + AMP + diphosphate + H(+). The catalysed reaction is tRNA(Sec) + L-serine + ATP = L-seryl-tRNA(Sec) + AMP + diphosphate + H(+). It participates in aminoacyl-tRNA biosynthesis; selenocysteinyl-tRNA(Sec) biosynthesis; L-seryl-tRNA(Sec) from L-serine and tRNA(Sec): step 1/1. Catalyzes the attachment of serine to tRNA(Ser). Is also able to aminoacylate tRNA(Sec) with serine, to form the misacylated tRNA L-seryl-tRNA(Sec), which will be further converted into selenocysteinyl-tRNA(Sec). This Shewanella loihica (strain ATCC BAA-1088 / PV-4) protein is Serine--tRNA ligase.